Consider the following 271-residue polypeptide: Ferric vulnibactin reductase VuuB (271 aa).

The FAD-binding FR-type domain maps to 8–131 (VYPMLLDFVR…IGPAGPDPLI (124 aa)).

Belongs to the SIP oxidoreductase family. In terms of assembly, monomer. Requires FAD as cofactor.

It localises to the cytoplasm. It carries out the reaction 2 a Fe(II)-siderophore + NAD(+) + H(+) = 2 a Fe(III)-siderophore + NADH. Its function is as follows. Ferric-siderophore reductase involved in iron removal from the siderophores after their transport into the cell. Acts as a major ferric-vulnibactin reductase catalyzing the reduction of Fe(3+)-vulnibactin, a catecholate siderophore synthesized by V.vulnificus. Catalyzes reduction of Fe(3+)-aerobactin, a citrate-hydroxamate siderophore produced by other bacteria, in the absence of IutB. Catalyzes reduction of Fe(3+)-vibriobactin in vitro. No activity with ferrioxamine B or Fe(3+)-enterobactin. Catalyzes reduction of ferric chelating compounds Fe(3+)-nitrilotriacetic acid (NTA), Fe(3+)-citrate and Fe(3+)-EDTA as well as non-complexed FeCl3 in the presence of NADH as its electron donor and FAD as its cofactor in vitro. Highest activity with Fe(3+)-NTA as electron acceptor. In Vibrio vulnificus, this protein is Ferric vulnibactin reductase VuuB.